Consider the following 343-residue polypeptide: Anthranilate phosphoribosyltransferase (343 aa).

5-phospho-alpha-D-ribose 1-diphosphate-binding positions include Gly78, 81–82 (GD), Thr86, 88–91 (NIST), 106–114 (KHGNRSVSS), and Ser118. An anthranilate-binding site is contributed by Gly78. Ser90 is a Mg(2+) binding site. Asn109 contributes to the anthranilate binding site. Arg164 serves as a coordination point for anthranilate. Positions 223 and 224 each coordinate Mg(2+).

The protein belongs to the anthranilate phosphoribosyltransferase family. In terms of assembly, homodimer. Requires Mg(2+) as cofactor.

The enzyme catalyses N-(5-phospho-beta-D-ribosyl)anthranilate + diphosphate = 5-phospho-alpha-D-ribose 1-diphosphate + anthranilate. The protein operates within amino-acid biosynthesis; L-tryptophan biosynthesis; L-tryptophan from chorismate: step 2/5. Catalyzes the transfer of the phosphoribosyl group of 5-phosphorylribose-1-pyrophosphate (PRPP) to anthranilate to yield N-(5'-phosphoribosyl)-anthranilate (PRA). This is Anthranilate phosphoribosyltransferase from Chlamydia felis (strain Fe/C-56) (Chlamydophila felis).